The sequence spans 424 residues: CinA-like protein (424 aa).

This sequence belongs to the CinA family.

This is CinA-like protein from Syntrophobacter fumaroxidans (strain DSM 10017 / MPOB).